Here is a 184-residue protein sequence, read N- to C-terminus: 3-hydroxyanthranilate 3,4-dioxygenase (184 aa).

R44 is an O2 binding site. Fe cation contacts are provided by H48, E54, and H92. E54 serves as a coordination point for substrate. Residues R96 and E106 each contribute to the substrate site. A divalent metal cation-binding residues include C121, C126, C162, and C165.

It belongs to the 3-HAO family. Requires Fe(2+) as cofactor.

Its subcellular location is the cytoplasm. The enzyme catalyses 3-hydroxyanthranilate + O2 = (2Z,4Z)-2-amino-3-carboxymuconate 6-semialdehyde. Its pathway is cofactor biosynthesis; NAD(+) biosynthesis; quinolinate from L-kynurenine: step 3/3. Catalyzes the oxidative ring opening of 3-hydroxyanthranilate to 2-amino-3-carboxymuconate semialdehyde, which spontaneously cyclizes to quinolinate. The sequence is that of 3-hydroxyanthranilate 3,4-dioxygenase from Pyricularia oryzae (strain 70-15 / ATCC MYA-4617 / FGSC 8958) (Rice blast fungus).